A 123-amino-acid chain; its full sequence is uncharacterized protein (123 aa).

At Thr-56 the chain carries Phosphothreonine. Residues Ser-73, Ser-87, Ser-97, Ser-113, and Ser-119 each carry the phosphoserine modification.

As to expression, highly expressed in the kidney (at protein level).

It is found in the cytoplasm. This is an uncharacterized protein from Felis catus (Cat).